A 396-amino-acid polypeptide reads, in one-letter code: Tryptophan synthase beta chain (396 aa).

K86 carries the N6-(pyridoxal phosphate)lysine modification.

This sequence belongs to the TrpB family. As to quaternary structure, tetramer of two alpha and two beta chains. Pyridoxal 5'-phosphate is required as a cofactor.

It carries out the reaction (1S,2R)-1-C-(indol-3-yl)glycerol 3-phosphate + L-serine = D-glyceraldehyde 3-phosphate + L-tryptophan + H2O. It participates in amino-acid biosynthesis; L-tryptophan biosynthesis; L-tryptophan from chorismate: step 5/5. Functionally, the beta subunit is responsible for the synthesis of L-tryptophan from indole and L-serine. The sequence is that of Tryptophan synthase beta chain from Vibrio campbellii (strain ATCC BAA-1116).